Here is a 642-residue protein sequence, read N- to C-terminus: MPIITLPDGSKRAFEDAVTVMQVASDIGAGLAKATIAGRVNGQLKEASDLITEDAELQLITLKDEDGLHIMRHSCAHLLGHALKQLYPAAKMAIGPVVENGFYYDIDMEEKITPEDLKQIEKRMKELAKTKYEVIKEMTPRAEALATFKERQEDYKVELIEDMPDETEFGLYHHQEYIDMCRGPHVPNMGFIKAFKLTHVAGAYWRGNSDNKMLQRIYGVAFADKQELKDYLRMMEEAEKRDHRKLGKSLDLFHVDELAPGMAFWHPKGSTLYRVVENYMRQQLVENDYQEIRTPLIMDRTLWEKSGHWDKFKDNMFTTETENRDYAVKPMNCPGHIQVYNHNLSSYRDLPIRLAEFGLVHRNEPSGTLHGLMRVRSFTQDDAHIFCTPEQIKEEVQACIDLVFNTYADFGFDNIQVKFSTRPEQRVGEDDVWDLAEEALEQTLKDANLEYALQPGEGAFYGPKIEFQLKDCIGRVWQCGTIQLDFSMTQEERLNAVYIGADNEKHHPVMIHRAILGSLERFVGILVEHYEGKFPTWLAPTQLVIASIADVHNEYVNDFAKKLKKHGFRVESDLRNEKVGFKIREHTLQRVPYILVVGDQEMENGTVNVRARGGENLGSFSFEELIDHLSEDVSRLGRIVES.

One can recognise a TGS domain in the interval 1-61 (MPIITLPDGS…TEDAELQLIT (61 aa)). The tract at residues 242 to 535 (DHRKLGKSLD…LVEHYEGKFP (294 aa)) is catalytic. Zn(2+) contacts are provided by Cys333, His384, and His512.

The protein belongs to the class-II aminoacyl-tRNA synthetase family. In terms of assembly, homodimer. Zn(2+) serves as cofactor.

It localises to the cytoplasm. The enzyme catalyses tRNA(Thr) + L-threonine + ATP = L-threonyl-tRNA(Thr) + AMP + diphosphate + H(+). Functionally, catalyzes the attachment of threonine to tRNA(Thr) in a two-step reaction: L-threonine is first activated by ATP to form Thr-AMP and then transferred to the acceptor end of tRNA(Thr). Also edits incorrectly charged L-seryl-tRNA(Thr). This is Threonine--tRNA ligase from Hydrogenovibrio crunogenus (strain DSM 25203 / XCL-2) (Thiomicrospira crunogena).